We begin with the raw amino-acid sequence, 212 residues long: Ras-related protein Rab-17 (212 aa).

Phosphoserine is present on S29. GTP contacts are provided by G31, K32, S33, and T50. Positions 33, 50, and 73 each coordinate Mg(2+). The Switch 1 motif lies at D43–A54. The short motif at A75 to A91 is the Switch 2 element. 5 residues coordinate GTP: G76, N132, K133, D135, and A163. Residues C209 and C210 are each lipidated (S-geranylgeranyl cysteine).

The protein belongs to the small GTPase superfamily. Rab family. Mg(2+) is required as a cofactor. In terms of tissue distribution, expressed in melanocytes (at protein level).

The protein resides in the recycling endosome membrane. It is found in the melanosome. The protein localises to the cell projection. It localises to the dendrite. The enzyme catalyses GTP + H2O = GDP + phosphate + H(+). Regulated by guanine nucleotide exchange factors (GEFs) which promote the exchange of bound GDP for free GTP. Regulated by GTPase activating proteins (GAPs) which increase the GTP hydrolysis activity. Inhibited by GDP dissociation inhibitors (GDIs). Functionally, the small GTPases Rab are key regulators of intracellular membrane trafficking, from the formation of transport vesicles to their fusion with membranes. Rabs cycle between an inactive GDP-bound form and an active GTP-bound form that is able to recruit to membranes different set of downstream effectors directly responsible for vesicle formation, movement, tethering and fusion. RAB17 is involved in transcytosis, the directed movement of endocytosed material through the cell and its exocytosis from the plasma membrane at the opposite side. Mainly observed in epithelial cells, transcytosis mediates for instance, the transcellular transport of immunoglobulins from the basolateral surface to the apical surface. Most probably controls membrane trafficking through apical recycling endosomes in a post-endocytic step of transcytosis. Required for melanosome transport and release from melanocytes, it also regulates dendrite and dendritic spine development. May also play a role in cell migration. This is Ras-related protein Rab-17 from Homo sapiens (Human).